An 86-amino-acid polypeptide reads, in one-letter code: RNA-binding protein Hfq (86 aa).

The 60-residue stretch at 9 to 68 (DPYLNTLRKEKVGVSIYLVNGIKLQGTIESFDQFVILLKNTVSQMVYKHAISTVVPVRPI) folds into the Sm domain.

The protein belongs to the Hfq family. In terms of assembly, homohexamer.

RNA chaperone that binds small regulatory RNA (sRNAs) and mRNAs to facilitate mRNA translational regulation in response to envelope stress, environmental stress and changes in metabolite concentrations. Also binds with high specificity to tRNAs. The sequence is that of RNA-binding protein Hfq from Pseudomonas fluorescens (strain ATCC BAA-477 / NRRL B-23932 / Pf-5).